The following is a 357-amino-acid chain: Peptide chain release factor 1 (357 aa).

At glutamine 233 the chain carries N5-methylglutamine.

It belongs to the prokaryotic/mitochondrial release factor family. Methylated by PrmC. Methylation increases the termination efficiency of RF1.

It is found in the cytoplasm. Its function is as follows. Peptide chain release factor 1 directs the termination of translation in response to the peptide chain termination codons UAG and UAA. This Flavobacterium psychrophilum (strain ATCC 49511 / DSM 21280 / CIP 103535 / JIP02/86) protein is Peptide chain release factor 1.